The sequence spans 382 residues: PqqA peptide cyclase (382 aa).

Residues 8 to 223 form the Radical SAM core domain; it reads VKPPLWLLAE…VHRYREKMAA (216 aa). The [4Fe-4S] cluster site is built by Cys-22, Cys-26, and Cys-29.

This sequence belongs to the radical SAM superfamily. PqqE family. Interacts with PqqD. The interaction is necessary for activity of PqqE. [4Fe-4S] cluster is required as a cofactor.

The catalysed reaction is [PQQ precursor protein] + S-adenosyl-L-methionine = E-Y cross-linked-[PQQ precursor protein] + 5'-deoxyadenosine + L-methionine + H(+). It participates in cofactor biosynthesis; pyrroloquinoline quinone biosynthesis. Functionally, catalyzes the cross-linking of a glutamate residue and a tyrosine residue in the PqqA protein as part of the biosynthesis of pyrroloquinoline quinone (PQQ). The polypeptide is PqqA peptide cyclase (Erwinia tasmaniensis (strain DSM 17950 / CFBP 7177 / CIP 109463 / NCPPB 4357 / Et1/99)).